Consider the following 142-residue polypeptide: Organic hydroperoxide resistance protein-like 2 (142 aa).

The protein belongs to the OsmC/Ohr family.

This is Organic hydroperoxide resistance protein-like 2 from Staphylococcus epidermidis (strain ATCC 35984 / DSM 28319 / BCRC 17069 / CCUG 31568 / BM 3577 / RP62A).